The chain runs to 95 residues: Co-chaperonin GroES (95 aa).

The protein belongs to the GroES chaperonin family. In terms of assembly, heptamer of 7 subunits arranged in a ring. Interacts with the chaperonin GroEL.

The protein resides in the cytoplasm. In terms of biological role, together with the chaperonin GroEL, plays an essential role in assisting protein folding. The GroEL-GroES system forms a nano-cage that allows encapsulation of the non-native substrate proteins and provides a physical environment optimized to promote and accelerate protein folding. GroES binds to the apical surface of the GroEL ring, thereby capping the opening of the GroEL channel. The protein is Co-chaperonin GroES of Geobacter sulfurreducens (strain ATCC 51573 / DSM 12127 / PCA).